A 284-amino-acid polypeptide reads, in one-letter code: Pantothenate synthetase (284 aa).

30 to 37 is an ATP binding site; sequence MGNLHDGH. Catalysis depends on H37, which acts as the Proton donor. (R)-pantoate is bound at residue Q61. Q61 lines the beta-alanine pocket. An ATP-binding site is contributed by 149–152; that stretch reads GEKD. Q155 provides a ligand contact to (R)-pantoate. ATP-binding positions include I178 and 186-189; that span reads LSSR.

The protein belongs to the pantothenate synthetase family. Homodimer.

The protein localises to the cytoplasm. The enzyme catalyses (R)-pantoate + beta-alanine + ATP = (R)-pantothenate + AMP + diphosphate + H(+). Its pathway is cofactor biosynthesis; (R)-pantothenate biosynthesis; (R)-pantothenate from (R)-pantoate and beta-alanine: step 1/1. Functionally, catalyzes the condensation of pantoate with beta-alanine in an ATP-dependent reaction via a pantoyl-adenylate intermediate. The sequence is that of Pantothenate synthetase from Salmonella heidelberg (strain SL476).